We begin with the raw amino-acid sequence, 316 residues long: ATP synthase gamma chain (316 aa).

The protein belongs to the ATPase gamma chain family. In terms of assembly, F-type ATPases have 2 components, CF(1) - the catalytic core - and CF(0) - the membrane proton channel. CF(1) has five subunits: alpha(3), beta(3), gamma(1), delta(1), epsilon(1). CF(0) has three main subunits: a, b and c.

Its subcellular location is the cellular thylakoid membrane. Produces ATP from ADP in the presence of a proton gradient across the membrane. The gamma chain is believed to be important in regulating ATPase activity and the flow of protons through the CF(0) complex. This chain is ATP synthase gamma chain, found in Prochlorococcus marinus (strain SARG / CCMP1375 / SS120).